A 37-amino-acid chain; its full sequence is Large ribosomal subunit protein bL36A (37 aa).

Belongs to the bacterial ribosomal protein bL36 family.

The protein is Large ribosomal subunit protein bL36A of Kocuria rhizophila (strain ATCC 9341 / DSM 348 / NBRC 103217 / DC2201).